Here is a 157-residue protein sequence, read N- to C-terminus: uncharacterized protein (157 aa).

Residues 3 to 157 (FTLEDMTEEE…TNIRMRKQLC (155 aa)) enclose the N-acetyltransferase domain.

It belongs to the acetyltransferase family.

This is an uncharacterized protein from Bacillus subtilis (strain 168).